We begin with the raw amino-acid sequence, 553 residues long: Methyl-coenzyme M reductase II subunit alpha (553 aa).

Residue glutamine 150 participates in coenzyme F430 binding. Coenzyme B-binding positions include arginine 228, 259–260, and arginine 273; that span reads KH. Position 260 is a pros-methylhistidine (histidine 260). Arginine 274 is modified (5-methylarginine). Tyrosine 335 contacts coenzyme M. Position 402 is a 2-methylglutamine (glutamine 402). Tyrosine 446 is a coenzyme M binding site. Glycine 447 is modified (1-thioglycine). The residue at position 452 (aspartate 452) is a (Z)-2,3-didehydroaspartate. The residue at position 454 (cysteine 454) is an S-methylcysteine.

The protein belongs to the methyl-coenzyme M reductase alpha subunit family. MCR is a hexamer of two alpha, two beta, and two gamma chains, forming a dimer of heterotrimers. Requires coenzyme F430 as cofactor. The alpha subunit contains six modified amino acids near the active site region. Is methylated on His-260, Arg-274, Gln-402 and Cys-454, probably by the action of specific S-adenosylmethionine-dependent methyltransferases. Also contains a thioglycine at position 447, forming a thiopeptide bond. Contains a didehydroaspartate residue at position 452. The methylation on C5 of Arg-274 is a post-translational methylation not essential in vivo, but which plays a role for the stability and structural integrity of MCR.

The enzyme catalyses coenzyme B + methyl-coenzyme M = methane + coenzyme M-coenzyme B heterodisulfide. It functions in the pathway one-carbon metabolism; methyl-coenzyme M reduction; methane from methyl-coenzyme M: step 1/1. In terms of biological role, component of the methyl-coenzyme M reductase (MCR) I that catalyzes the reductive cleavage of methyl-coenzyme M (CoM-S-CH3 or 2-(methylthio)ethanesulfonate) using coenzyme B (CoB or 7-mercaptoheptanoylthreonine phosphate) as reductant which results in the production of methane and the mixed heterodisulfide of CoB and CoM (CoM-S-S-CoB). This is the final step in methanogenesis. The chain is Methyl-coenzyme M reductase II subunit alpha (mrtA) from Methanothermobacter thermautotrophicus (strain ATCC 29096 / DSM 1053 / JCM 10044 / NBRC 100330 / Delta H) (Methanobacterium thermoautotrophicum).